The following is a 242-amino-acid chain: Myogenic factor 6 (242 aa).

The disordered stretch occupies residues 31 to 63; that stretch reads SPLYPGSDGTLSPCQDQMPPEAGSDSSGEEHVL. Positions 93-144 constitute a bHLH domain; sequence DRRKAATLRERRRLKKINEAFEALKRRTVANPNQRLPKVEILRSAISYIERL.

In terms of assembly, efficient DNA binding requires dimerization with another bHLH protein. Interacts with CSRP3. In terms of tissue distribution, skeletal muscle.

Its subcellular location is the nucleus. Its function is as follows. Involved in muscle differentiation (myogenic factor). Induces fibroblasts to differentiate into myoblasts. Probable sequence specific DNA-binding protein. The chain is Myogenic factor 6 (MYF6) from Homo sapiens (Human).